Reading from the N-terminus, the 523-residue chain is GMP synthase [glutamine-hydrolyzing] (523 aa).

A Glutamine amidotransferase type-1 domain is found at 8–205; the sequence is KILILDFGSQ…VVDICGCETN (198 aa). Cys85 serves as the catalytic Nucleophile. Active-site residues include His179 and Glu181. One can recognise a GMPS ATP-PPase domain in the interval 206–398; sequence WTAENIIEDA…LGLPAEMLNR (193 aa). An ATP-binding site is contributed by 233–239; it reads SGGVDSS.

Homodimer.

The catalysed reaction is XMP + L-glutamine + ATP + H2O = GMP + L-glutamate + AMP + diphosphate + 2 H(+). Its pathway is purine metabolism; GMP biosynthesis; GMP from XMP (L-Gln route): step 1/1. Its function is as follows. Catalyzes the synthesis of GMP from XMP. This is GMP synthase [glutamine-hydrolyzing] from Histophilus somni (strain 2336) (Haemophilus somnus).